We begin with the raw amino-acid sequence, 655 residues long: Large subunit GTPase 1 homolog (655 aa).

The interval 1-31 is disordered; that stretch reads MGRRRAPGGGSLGRVLIRHQTQRSRSHRHTD. The segment covering 16–28 has biased composition (basic residues); that stretch reads LIRHQTQRSRSHR. Phosphoserine occurs at positions 93 and 97. The CP-type G domain occupies 164-441; the sequence is WRQLWRVIER…LCDCPGLVMP (278 aa). Residue 212–215 coordinates GTP; it reads NKAD. Serine 252 bears the Phosphoserine mark. The segment at 253–359 is disordered; that stretch reads KDEVNSVAGE…ENSQMSNKSH (107 aa). The segment covering 288 to 327 has biased composition (acidic residues); the sequence is EESESDDDDSEYEDCQEDEEEDWQTCSEEDSNPEEGQEEG. Positions 328 to 339 are enriched in basic and acidic residues; the sequence is GCDRDQKEHGPE. The span at 344 to 359 shows a compositional bias: polar residues; it reads QSRASPENSQMSNKSH. Residues 390–397 and 434–437 contribute to the GTP site; these read GYPNVGKS and DCPG. A disordered region spans residues 625–655; the sequence is SAENVPGKPWKKHGNRNKKEKSRRLYRHLDV. Positions 633–655 are enriched in basic residues; sequence PWKKHGNRNKKEKSRRLYRHLDV.

This sequence belongs to the TRAFAC class YlqF/YawG GTPase family. LSG1 subfamily.

The protein localises to the cytoplasm. It is found in the endoplasmic reticulum. Its subcellular location is the nucleus. It localises to the cajal body. The catalysed reaction is GTP + H2O = GDP + phosphate + H(+). Functions as a GTPase. May act by mediating the release of NMD3 from the 60S ribosomal subunit after export into the cytoplasm during the 60S ribosomal subunit maturation. The protein is Large subunit GTPase 1 homolog of Rattus norvegicus (Rat).